Consider the following 279-residue polypeptide: Early nodulin-like protein 18 (279 aa).

Positions 1–24 are cleaved as a signal peptide; it reads MAGAVATVSVGLAWLGLMAAAASA. The 109-residue stretch at 25-133 folds into the Phytocyanin domain; it reads TQFRVGGGRG…GEKLVVVVMA (109 aa). An intrachain disulfide couples Cys82 to Cys121. Asn83 is a glycosylation site (N-linked (GlcNAc...) asparagine). A disordered region spans residues 138-256; it reads RHAPPPSPPA…ANDRSGAAAA (119 aa). Over residues 140-168 the composition is skewed to pro residues; the sequence is APPPSPPAVPPPVAPVPMPSPASSPPSPA. Residues 169 to 185 show a composition bias toward low complexity; that stretch reads PAAATPSLAPSPVATTP. Residues 186-199 are compositionally biased toward pro residues; it reads SPSPSVSPMAPAPA. 2 stretches are compositionally biased toward low complexity: residues 212-226 and 234-256; these read AAMA…GGVA and TDGA…AAAA. Asn238 carries an N-linked (GlcNAc...) asparagine glycan. Ser251 carries GPI-anchor amidated serine lipidation. The propeptide at 252–279 is removed in mature form; that stretch reads GAAAAAPVVAGVVVTSLGAYIGYAMLAI.

The protein belongs to the early nodulin-like (ENODL) family. As to expression, specifically expressed in reproductive tissues. Mainly observed in developing seeds and in mature leaves.

It localises to the cell membrane. Its function is as follows. May act as a carbohydrate transporter. Promotes tolerance to salt stress in a redox-dependent manner. The chain is Early nodulin-like protein 18 from Oryza sativa subsp. japonica (Rice).